The following is a 690-amino-acid chain: Exonuclease GOR (690 aa).

Disordered stretches follow at residues 136–162 (TRVA…NRSG) and 567–690 (QPRH…SLHH). The segment covering 585–595 (APSTTAISPES) has biased composition (polar residues). Over residues 605–614 (KETGAVDGRR) the composition is skewed to basic and acidic residues. Positions 612-626 (GRRGQKAKSNPNRPL) are GOR14-1 epitope. A compositionally biased stretch (low complexity) spans 631-646 (NPCRGPSGLSPSLCPS). Pro residues predominate over residues 661 to 682 (PPLPVPRVPAAPPRACPHPSAH).

It belongs to the REXO1/REXO3 family.

It is found in the cytoplasm. Its subcellular location is the nucleus. In Pan troglodytes (Chimpanzee), this protein is Exonuclease GOR (REXO1L1).